The sequence spans 269 residues: 4-hydroxy-tetrahydrodipicolinate reductase (269 aa).

11–16 (GPIGRM) provides a ligand contact to NAD(+). Lysine 39 is an NADP(+) binding site. NAD(+) is bound by residues 101–103 (GTT) and 125–128 (ASNF). Residue histidine 158 is the Proton donor/acceptor of the active site. Histidine 159 provides a ligand contact to (S)-2,3,4,5-tetrahydrodipicolinate. The active-site Proton donor is the lysine 162. 168 to 169 (GT) is a (S)-2,3,4,5-tetrahydrodipicolinate binding site.

The protein belongs to the DapB family. In terms of assembly, homotetramer.

Its subcellular location is the cytoplasm. The enzyme catalyses (S)-2,3,4,5-tetrahydrodipicolinate + NAD(+) + H2O = (2S,4S)-4-hydroxy-2,3,4,5-tetrahydrodipicolinate + NADH + H(+). It catalyses the reaction (S)-2,3,4,5-tetrahydrodipicolinate + NADP(+) + H2O = (2S,4S)-4-hydroxy-2,3,4,5-tetrahydrodipicolinate + NADPH + H(+). Its pathway is amino-acid biosynthesis; L-lysine biosynthesis via DAP pathway; (S)-tetrahydrodipicolinate from L-aspartate: step 4/4. Functionally, catalyzes the conversion of 4-hydroxy-tetrahydrodipicolinate (HTPA) to tetrahydrodipicolinate. The protein is 4-hydroxy-tetrahydrodipicolinate reductase of Buchnera aphidicola subsp. Acyrthosiphon pisum (strain Tuc7).